The primary structure comprises 487 residues: MAFNLSKIFAHTDRDPLIRELTLDSRNVRPGDLFLAVPGIKVDGRAHIADALKRGAAAVAYEVEGATVLPITDVPLIPVKGLAAQLSDVAGRFYGDPSRSLNLVGVTGTNGKTSVTQLVAQALDALGQRCGIVGTLGTGFYGALQSGRHTTPDPIAVQAALTDLRKAGARAVAMEVSSHGLDQGRATALAFDVAVLTNLSRDHLDYHGTMEAYAAAKAKLFAWPNLNCRVINLDDDFGRELAGLKQESRLITYSQLDSSAYLYCRDAKFDDDGVRATLVTPQGEHFLRSSLLGRFNLSNVLAAVGALLGLDYALDEILKVLPKLEGPVGRMQRLGGADKPLVVVDYAHTPDALEKVLEALRPHAKGRLLCLFGCGGDRDRGKRPLMAEVVERLADGVWVTDDNPRSEAPTNIFDDIRPGFVTADKVRFIEGRGQAIAELIASATVDDVVVLAGKGHEDYQEIDGKRQPFSDLEEAATALAAWGPEND.

Positions 23 and 25 each coordinate UDP-N-acetyl-alpha-D-muramoyl-L-alanyl-D-glutamate. 108 to 114 (GTNGKTS) contributes to the ATP binding site. Residues 150 to 151 (TT), S177, Q183, and R185 contribute to the UDP-N-acetyl-alpha-D-muramoyl-L-alanyl-D-glutamate site. K217 is subject to N6-carboxylysine. Meso-2,6-diaminopimelate contacts are provided by residues R378, 402–405 (DNPR), G453, and E457. Positions 402–405 (DNPR) match the Meso-diaminopimelate recognition motif motif.

Belongs to the MurCDEF family. MurE subfamily. Mg(2+) is required as a cofactor. Post-translationally, carboxylation is probably crucial for Mg(2+) binding and, consequently, for the gamma-phosphate positioning of ATP.

The protein resides in the cytoplasm. The enzyme catalyses UDP-N-acetyl-alpha-D-muramoyl-L-alanyl-D-glutamate + meso-2,6-diaminopimelate + ATP = UDP-N-acetyl-alpha-D-muramoyl-L-alanyl-gamma-D-glutamyl-meso-2,6-diaminopimelate + ADP + phosphate + H(+). It functions in the pathway cell wall biogenesis; peptidoglycan biosynthesis. Functionally, catalyzes the addition of meso-diaminopimelic acid to the nucleotide precursor UDP-N-acetylmuramoyl-L-alanyl-D-glutamate (UMAG) in the biosynthesis of bacterial cell-wall peptidoglycan. The polypeptide is UDP-N-acetylmuramoyl-L-alanyl-D-glutamate--2,6-diaminopimelate ligase (Pseudomonas syringae pv. tomato (strain ATCC BAA-871 / DC3000)).